Reading from the N-terminus, the 91-residue chain is Small ribosomal subunit protein uS15 (91 aa).

It belongs to the universal ribosomal protein uS15 family. Part of the 30S ribosomal subunit. Forms a bridge to the 50S subunit in the 70S ribosome, contacting the 23S rRNA.

Functionally, one of the primary rRNA binding proteins, it binds directly to 16S rRNA where it helps nucleate assembly of the platform of the 30S subunit by binding and bridging several RNA helices of the 16S rRNA. Forms an intersubunit bridge (bridge B4) with the 23S rRNA of the 50S subunit in the ribosome. The polypeptide is Small ribosomal subunit protein uS15 (Synechococcus sp. (strain JA-3-3Ab) (Cyanobacteria bacterium Yellowstone A-Prime)).